Reading from the N-terminus, the 2304-residue chain is RNA1 polyprotein (2304 aa).

Topologically, residues 588-1195 are cytoplasmic; the sequence is KDDTLVSDLL…YEYVRTYGPK (608 aa). Positions 786 to 950 constitute an SF3 helicase domain; sequence LEKIHTQSVR…PEYSPMGMEL (165 aa). 813 to 820 contributes to the ATP binding site; that stretch reads GPSHCGKS. Residues 1196 to 1216 traverse the membrane as a helical segment; it reads IFPILMGFVCVVFACYGFIMP. Over 1217–1243 the chain is Lumenal; the sequence is LLSFASGGSAVGGMVAMEQIAAASVVS. The region spanning 1269–1482 is the Peptidase C3 domain; sequence GASAEDAYAY…GLLPSALHMT (214 aa). Residues histidine 1309, glutamate 1348, and cysteine 1444 each act as for picornain 3C-like protease activity in the active site. Residues 1762–1900 form the RdRp catalytic domain; that stretch reads SVAYNCDYSK…AVDPSMQKIF (139 aa).

Belongs to the nepoviruses RNA1 polyprotein family. Specific enzymatic cleavages by picornain 3C-like protease in vivo yield mature proteins. Picornain 3C-like protease is autocatalytically processed. In terms of processing, VPg is uridylylated by the polymerase and is covalently linked to the 5'-end of genomic RNA. This uridylylated form acts as a nucleotide-peptide primer for the polymerase.

The protein localises to the host endoplasmic reticulum lumen. The protein resides in the host endoplasmic reticulum membrane. It catalyses the reaction RNA(n) + a ribonucleoside 5'-triphosphate = RNA(n+1) + diphosphate. Its function is as follows. Picornain 3C-like protease is a thiol protease that cleaves the P1 and P2 polyproteins. The sequence is that of RNA1 polyprotein from Tobacco ringspot virus (TobRV).